We begin with the raw amino-acid sequence, 699 residues long: Kinesin-II 85 kDa subunit (699 aa).

Positions 10-342 (NVRVVVRCRP…LRYANRAKNI (333 aa)) constitute a Kinesin motor domain. ATP is bound at residue 97–104 (GQTGTGKT). The stretch at 341–619 (NIKNKAKINE…EDIGEWQLKC (279 aa)) forms a coiled coil. 3 disordered regions span residues 369–415 (KQIS…LSPE), 432–456 (EEKK…ESEL), and 660–699 (GMKY…ALLQ). Acidic residues predominate over residues 376–395 (EGLDDDEESGSEESGDEEAG). Basic residues predominate over residues 400–411 (KKKRKGKNPKRK). A globular region spans residues 620-699 (VAYTGNNMRK…MASSIDALLQ (80 aa)). Positions 667–679 (QGKSGRPKTSSGR) are enriched in polar residues.

This sequence belongs to the TRAFAC class myosin-kinesin ATPase superfamily. Kinesin family. Kinesin II subfamily. As to quaternary structure, heterotrimer of a 115 kDa subunit (KAP115) and two kinesin-like subunits of 95 kDa (KRP95) and 85 kDa (KRP85). Post-translationally, the N-terminus is blocked.

Its subcellular location is the cytoplasm. It is found in the cytoskeleton. This is Kinesin-II 85 kDa subunit (KRP85) from Strongylocentrotus purpuratus (Purple sea urchin).